The sequence spans 880 residues: Arginine metabolism regulation protein II (880 aa).

The zn(2)-C6 fungal-type DNA-binding region spans Cys21–Cys48.

In terms of assembly, interacts with ARG80 and MCM1.

Its subcellular location is the cytoplasm. The protein resides in the nucleus. Functionally, with ARG80, ARG82 and MCM1, coordinates the expression of arginine anabolic and catabolic genes in response to arginine. In Saccharomyces cerevisiae (strain ATCC 204508 / S288c) (Baker's yeast), this protein is Arginine metabolism regulation protein II (ARG81).